Reading from the N-terminus, the 431-residue chain is Glutamate-1-semialdehyde 2,1-aminomutase (431 aa).

The residue at position 265 (lysine 265) is an N6-(pyridoxal phosphate)lysine.

Belongs to the class-III pyridoxal-phosphate-dependent aminotransferase family. HemL subfamily. In terms of assembly, homodimer. Pyridoxal 5'-phosphate serves as cofactor.

The protein localises to the cytoplasm. The catalysed reaction is (S)-4-amino-5-oxopentanoate = 5-aminolevulinate. The protein operates within porphyrin-containing compound metabolism; protoporphyrin-IX biosynthesis; 5-aminolevulinate from L-glutamyl-tRNA(Glu): step 2/2. The chain is Glutamate-1-semialdehyde 2,1-aminomutase from Vibrio vulnificus (strain CMCP6).